Here is a 1050-residue protein sequence, read N- to C-terminus: Sucrose-phosphate synthase 4 (1050 aa).

Positions 134–167 (QGRNDAEEDLLSELSEGEKDKNDGEKEKSEVVTT) are disordered. Residue serine 148 is modified to Phosphoserine. The segment covering 149-163 (EGEKDKNDGEKEKSE) has biased composition (basic and acidic residues). The residue at position 180 (serine 180) is a Phosphoserine.

The protein belongs to the glycosyltransferase 1 family. In terms of assembly, homodimer or homotetramer.

It carries out the reaction beta-D-fructose 6-phosphate + UDP-alpha-D-glucose = sucrose 6(F)-phosphate + UDP + H(+). It functions in the pathway glycan biosynthesis; sucrose biosynthesis; sucrose from D-fructose 6-phosphate and UDP-alpha-D-glucose: step 1/2. Activity is regulated by phosphorylation and moderated by concentration of metabolites and light. Functionally, plays a role in photosynthetic sucrose synthesis by catalyzing the rate-limiting step of sucrose biosynthesis from UDP-glucose and fructose- 6-phosphate. Involved in the regulation of carbon partitioning in the leaves of plants. May regulate the synthesis of sucrose and therefore play a major role as a limiting factor in the export of photoassimilates out of the leaf. Plays a role for sucrose availability that is essential for plant growth and fiber elongation. This is Sucrose-phosphate synthase 4 from Arabidopsis thaliana (Mouse-ear cress).